We begin with the raw amino-acid sequence, 345 residues long: Holliday junction branch migration complex subunit RuvB (345 aa).

Residues 1 to 183 form a large ATPase domain (RuvB-L) region; that stretch reads MTTQRLVSAA…FGIVHRLEFY (183 aa). ATP-binding positions include I22, R23, G64, K67, T68, T69, 130-132, R173, Y183, and R220; that span reads EDY. T68 contributes to the Mg(2+) binding site. The interval 184-254 is small ATPAse domain (RuvB-S); it reads SVEELSRIVA…VAGKALEMLD (71 aa). Residues 257–345 form a head domain (RuvB-H) region; that stretch reads PNGFDQSDRR…NVNEELFGDE (89 aa). 3 residues coordinate DNA: R293, R312, and R317.

The protein belongs to the RuvB family. As to quaternary structure, homohexamer. Forms an RuvA(8)-RuvB(12)-Holliday junction (HJ) complex. HJ DNA is sandwiched between 2 RuvA tetramers; dsDNA enters through RuvA and exits via RuvB. An RuvB hexamer assembles on each DNA strand where it exits the tetramer. Each RuvB hexamer is contacted by two RuvA subunits (via domain III) on 2 adjacent RuvB subunits; this complex drives branch migration. In the full resolvosome a probable DNA-RuvA(4)-RuvB(12)-RuvC(2) complex forms which resolves the HJ.

It is found in the cytoplasm. It catalyses the reaction ATP + H2O = ADP + phosphate + H(+). In terms of biological role, the RuvA-RuvB-RuvC complex processes Holliday junction (HJ) DNA during genetic recombination and DNA repair, while the RuvA-RuvB complex plays an important role in the rescue of blocked DNA replication forks via replication fork reversal (RFR). RuvA specifically binds to HJ cruciform DNA, conferring on it an open structure. The RuvB hexamer acts as an ATP-dependent pump, pulling dsDNA into and through the RuvAB complex. RuvB forms 2 homohexamers on either side of HJ DNA bound by 1 or 2 RuvA tetramers; 4 subunits per hexamer contact DNA at a time. Coordinated motions by a converter formed by DNA-disengaged RuvB subunits stimulates ATP hydrolysis and nucleotide exchange. Immobilization of the converter enables RuvB to convert the ATP-contained energy into a lever motion, pulling 2 nucleotides of DNA out of the RuvA tetramer per ATP hydrolyzed, thus driving DNA branch migration. The RuvB motors rotate together with the DNA substrate, which together with the progressing nucleotide cycle form the mechanistic basis for DNA recombination by continuous HJ branch migration. Branch migration allows RuvC to scan DNA until it finds its consensus sequence, where it cleaves and resolves cruciform DNA. This is Holliday junction branch migration complex subunit RuvB from Methylococcus capsulatus (strain ATCC 33009 / NCIMB 11132 / Bath).